The chain runs to 358 residues: WD repeat-containing protein 53 (358 aa).

WD repeat units lie at residues Gly-8–Gln-47, Val-92–Ser-131, Arg-134–Ile-174, Leu-195–Glu-234, and Gly-239–Gln-278. The segment at Lys-288–Asp-309 is disordered.

This sequence belongs to the WD repeat WDR53 family.

This chain is WD repeat-containing protein 53 (Wdr53), found in Mus musculus (Mouse).